We begin with the raw amino-acid sequence, 87 residues long: Glutaredoxin (87 aa).

One can recognise a Glutaredoxin domain in the interval 1–87 (MFKVYGYDSN…GFDQLREYFK (87 aa)). A disulfide bridge connects residues cysteine 14 and cysteine 17.

The protein belongs to the glutaredoxin family.

Serves as a reducing agent for the phage-induced ribonucleotide reductase, but not for the bacterial ones. This specificity may be the result of sequence differences around the redox-active disulfide bond. The oxidized form accepts electrons from bacterial glutathione and will, in turn, reduce other small disulfides. Can also be reduced by NADPH and by bacterial thioredoxin reductase. The polypeptide is Glutaredoxin (NRDC) (Enterobacteria phage T4 (Bacteriophage T4)).